We begin with the raw amino-acid sequence, 665 residues long: Probable potassium transport system protein Kup (665 aa).

The segment covering 1-18 has biased composition (low complexity); sequence MASEAPHASAPDCAPASS. The tract at residues 1 to 31 is disordered; the sequence is MASEAPHASAPDCAPASSDIPQQDGGSTNGH. Transmembrane regions (helical) follow at residues 40–60, 83–103, 131–151, 171–191, 202–222, 245–265, 281–301, 332–352, 380–400, 409–429, 435–455, and 462–482; these read FFALALGSVGVVFGDIGTSPL, VVSLALWALILIVTIKYVVFI, LVFVLGVAGAALFYGDAVITP, GVTNEVVLLIATVMLLGLFFI, LFGPVCAVWFGVMFSLGLMNL, GLTGFIVLGAVFLTVTGVEAL, WLFFVLPCLAMNYLGQGAFAL, LVLLAGAATVIASQAVITGAF, IFVPQLNTMLLLGVLAIMFTF, AYGLAVTGTMIVTTCMAFIVM, WSMPMALLFLVPFLALDITFL, and FFSGGWLPVLIGAALFTIMAT.

Belongs to the HAK/KUP transporter (TC 2.A.72) family.

It is found in the cell inner membrane. The enzyme catalyses K(+)(in) + H(+)(in) = K(+)(out) + H(+)(out). Functionally, transport of potassium into the cell. Likely operates as a K(+):H(+) symporter. This is Probable potassium transport system protein Kup from Caulobacter vibrioides (strain ATCC 19089 / CIP 103742 / CB 15) (Caulobacter crescentus).